The sequence spans 259 residues: 4-hydroxy-tetrahydrodipicolinate reductase (259 aa).

Residues 9-14 (GAGGRM) and E35 contribute to the NAD(+) site. R36 contacts NADP(+). Residues 92 to 94 (GTT) and 116 to 119 (APNM) each bind NAD(+). H149 functions as the Proton donor/acceptor in the catalytic mechanism. Residue H150 participates in (S)-2,3,4,5-tetrahydrodipicolinate binding. K153 (proton donor) is an active-site residue. 159-160 (GT) provides a ligand contact to (S)-2,3,4,5-tetrahydrodipicolinate.

This sequence belongs to the DapB family.

The protein resides in the cytoplasm. The catalysed reaction is (S)-2,3,4,5-tetrahydrodipicolinate + NAD(+) + H2O = (2S,4S)-4-hydroxy-2,3,4,5-tetrahydrodipicolinate + NADH + H(+). It carries out the reaction (S)-2,3,4,5-tetrahydrodipicolinate + NADP(+) + H2O = (2S,4S)-4-hydroxy-2,3,4,5-tetrahydrodipicolinate + NADPH + H(+). The protein operates within amino-acid biosynthesis; L-lysine biosynthesis via DAP pathway; (S)-tetrahydrodipicolinate from L-aspartate: step 4/4. Functionally, catalyzes the conversion of 4-hydroxy-tetrahydrodipicolinate (HTPA) to tetrahydrodipicolinate. This is 4-hydroxy-tetrahydrodipicolinate reductase from Nitratidesulfovibrio vulgaris (strain DP4) (Desulfovibrio vulgaris).